Here is a 257-residue protein sequence, read N- to C-terminus: Uroplakin-1a (257 aa).

Over 1–13 the chain is Cytoplasmic; sequence MASAATEGEKGSP. Residues 14-34 form a helical membrane-spanning segment; that stretch reads VVVGLLVVGNIIILLSGLALF. Topologically, residues 35–58 are extracellular; that stretch reads AETVWVTADQYRVYPLMGVSGKDD. A helical membrane pass occupies residues 59–85; that stretch reads VFAGAWIAIFCGFSFFVVASFGVGAAL. The Cytoplasmic segment spans residues 86 to 90; sequence CRRRY. A helical membrane pass occupies residues 91–111; it reads MILTYLLLMLIVYIFECASCI. Residues 112–229 are Extracellular-facing; it reads TSYTHRDYMV…HIGHAIDSYT (118 aa). A glycan (N-linked (GlcNAc...) asparagine) is linked at Asn169. The helical transmembrane segment at 230 to 251 threads the bilayer; the sequence is WGISWFGFAILMWTLPVMLIAM. Residues 252–257 are Cytoplasmic-facing; the sequence is YFYTTL.

Belongs to the tetraspanin (TM4SF) family. As to quaternary structure, homodimer; disulfide-linked. Interacts with uroplakin-2 (UPK2). Binds to uropathogenic E.coli fimH.

It is found in the membrane. Component of the asymmetric unit membrane (AUM); a highly specialized biomembrane elaborated by terminally differentiated urothelial cells. May play an important role in normal bladder epithelial physiology, possibly in regulating membrane permeability of superficial umbrella cells or in stabilizing the apical membrane through AUM/cytoskeletal interactions. This Mus musculus (Mouse) protein is Uroplakin-1a (Upk1a).